The primary structure comprises 546 residues: ATP synthase subunit alpha (546 aa).

172–179 provides a ligand contact to ATP; that stretch reads GDRKTGKT. 2 stretches are compositionally biased toward polar residues: residues 511–520 and 536–546; these read FRTTEGNNLG and TELNVSRKTAK. Positions 511-546 are disordered; that stretch reads FRTTEGNNLGTEAPVDPLAADDVNKTELNVSRKTAK.

Belongs to the ATPase alpha/beta chains family. F-type ATPases have 2 components, CF(1) - the catalytic core - and CF(0) - the membrane proton channel. CF(1) has five subunits: alpha(3), beta(3), gamma(1), delta(1), epsilon(1). CF(0) has three main subunits: a(1), b(2) and c(9-12). The alpha and beta chains form an alternating ring which encloses part of the gamma chain. CF(1) is attached to CF(0) by a central stalk formed by the gamma and epsilon chains, while a peripheral stalk is formed by the delta and b chains.

It localises to the cell membrane. The catalysed reaction is ATP + H2O + 4 H(+)(in) = ADP + phosphate + 5 H(+)(out). Functionally, produces ATP from ADP in the presence of a proton gradient across the membrane. The alpha chain is a regulatory subunit. This chain is ATP synthase subunit alpha, found in Corynebacterium aurimucosum (strain ATCC 700975 / DSM 44827 / CIP 107346 / CN-1) (Corynebacterium nigricans).